The following is a 431-amino-acid chain: Enolase (431 aa).

Residue Q163 participates in (2R)-2-phosphoglycerate binding. E205 serves as the catalytic Proton donor. 3 residues coordinate Mg(2+): D242, E288, and D315. K340, R369, S370, and K391 together coordinate (2R)-2-phosphoglycerate. K340 (proton acceptor) is an active-site residue.

It belongs to the enolase family. Mg(2+) serves as cofactor.

It localises to the cytoplasm. Its subcellular location is the secreted. The protein resides in the cell surface. The catalysed reaction is (2R)-2-phosphoglycerate = phosphoenolpyruvate + H2O. The protein operates within carbohydrate degradation; glycolysis; pyruvate from D-glyceraldehyde 3-phosphate: step 4/5. Its function is as follows. Catalyzes the reversible conversion of 2-phosphoglycerate (2-PG) into phosphoenolpyruvate (PEP). It is essential for the degradation of carbohydrates via glycolysis. This is Enolase from Trichlorobacter lovleyi (strain ATCC BAA-1151 / DSM 17278 / SZ) (Geobacter lovleyi).